Reading from the N-terminus, the 303-residue chain is UDP-3-O-acyl-N-acetylglucosamine deacetylase (303 aa).

Residues H78, H237, and D241 each coordinate Zn(2+). H264 functions as the Proton donor in the catalytic mechanism.

The protein belongs to the LpxC family. The cofactor is Zn(2+).

It catalyses the reaction a UDP-3-O-[(3R)-3-hydroxyacyl]-N-acetyl-alpha-D-glucosamine + H2O = a UDP-3-O-[(3R)-3-hydroxyacyl]-alpha-D-glucosamine + acetate. It functions in the pathway glycolipid biosynthesis; lipid IV(A) biosynthesis; lipid IV(A) from (3R)-3-hydroxytetradecanoyl-[acyl-carrier-protein] and UDP-N-acetyl-alpha-D-glucosamine: step 2/6. Functionally, catalyzes the hydrolysis of UDP-3-O-myristoyl-N-acetylglucosamine to form UDP-3-O-myristoylglucosamine and acetate, the committed step in lipid A biosynthesis. The protein is UDP-3-O-acyl-N-acetylglucosamine deacetylase of Pseudomonas putida (strain GB-1).